The following is a 453-amino-acid chain: Bestrophin homolog 5 (453 aa).

Transmembrane regions (helical) follow at residues 78 to 98, 113 to 133, 275 to 295, and 314 to 334; these read ELIV…FALT, DARM…NIII, IPLM…FLCI, and LYIP…LKVA.

This sequence belongs to the anion channel-forming bestrophin (TC 1.A.46) family. Calcium-sensitive chloride channel subfamily. Forms oligomers.

The protein localises to the cell membrane. In terms of biological role, forms chloride channels. The protein is Bestrophin homolog 5 (best-5) of Caenorhabditis elegans.